Reading from the N-terminus, the 335-residue chain is DNA polymerase beta (335 aa).

Lys-41 is covalently cross-linked (Glycyl lysine isopeptide (Lys-Gly) (interchain with G-Cter in ubiquitin)). Lys-60 contacts K(+). Lys-60 provides a ligand contact to Na(+). A Glycyl lysine isopeptide (Lys-Gly) (interchain with G-Cter in ubiquitin) cross-link involves residue Lys-61. 2 residues coordinate K(+): Leu-62 and Val-65. Na(+) is bound by residues Leu-62 and Val-65. Lys-72 functions as the Nucleophile; Schiff-base intermediate with DNA; for 5'-dRP lyase activity in the catalytic mechanism. At Lys-72 the chain carries N6-acetyllysine. Residue Lys-81 forms a Glycyl lysine isopeptide (Lys-Gly) (interchain with G-Cter in ubiquitin) linkage. Position 83 is an omega-N-methylarginine; by PRMT6 (Arg-83). K(+) is bound by residues Thr-101, Val-103, and Ile-106. Thr-101, Val-103, and Ile-106 together coordinate Na(+). DATP is bound at residue Arg-149. Arg-149 contributes to the dCTP binding site. Position 149 (Arg-149) interacts with dGTP. A dTTP-binding site is contributed by Arg-149. An Omega-N-methylarginine; by PRMT6 modification is found at Arg-152. DATP contacts are provided by Ser-180, Arg-183, Gly-189, and Asp-190. The dCTP site is built by Ser-180, Arg-183, Gly-189, and Asp-190. DGTP-binding residues include Ser-180, Arg-183, Gly-189, Asp-190, and Asp-192. Positions 180, 183, 189, and 190 each coordinate dTTP. The interval 183-192 (RGAESSGDMD) is DNA-binding. Positions 190, 192, and 256 each coordinate Mg(2+).

Belongs to the DNA polymerase type-X family. As to quaternary structure, monomer. Binds single-stranded DNA (ssDNA). Interacts with APEX1, LIG1, LIG3, FEN1, PCNA and XRCC1. Interacts with HUWE1/ARF-BP1, STUB1/CHIP and USP47. Interacts with FAM168A. The cofactor is Mg(2+). In terms of processing, methylation by PRMT6 stimulates the polymerase activity by enhancing DNA binding and processivity. Post-translationally, ubiquitinated at Lys-41, Lys-61 and Lys-81: monoubiquitinated by HUWE1/ARF-BP1. Monoubiquitinated protein is then the target of STUB1/CHIP, which catalyzes polyubiquitination from monoubiquitin, leading to degradation by the proteasome. USP47 mediates the deubiquitination of monoubiquitinated protein, preventing polyubiquitination by STUB1/CHIP and its subsequent degradation.

Its subcellular location is the nucleus. The protein resides in the cytoplasm. The catalysed reaction is DNA(n) + a 2'-deoxyribonucleoside 5'-triphosphate = DNA(n+1) + diphosphate. It catalyses the reaction a 5'-end 2'-deoxyribose-2'-deoxyribonucleotide-DNA = (2E,4S)-4-hydroxypenten-2-al-5-phosphate + a 5'-end 5'-phospho-2'-deoxyribonucleoside-DNA + H(+). It carries out the reaction 2'-deoxyribonucleotide-(2'-deoxyribose 5'-phosphate)-2'-deoxyribonucleotide-DNA = a 3'-end 2'-deoxyribonucleotide-(2,3-dehydro-2,3-deoxyribose 5'-phosphate)-DNA + a 5'-end 5'-phospho-2'-deoxyribonucleoside-DNA + H(+). Its function is as follows. Repair polymerase that plays a key role in base-excision repair. During this process, the damaged base is excised by specific DNA glycosylases, the DNA backbone is nicked at the abasic site by an apurinic/apyrimidic (AP) endonuclease, and POLB removes 5'-deoxyribose-phosphate from the preincised AP site acting as a 5'-deoxyribose-phosphate lyase (5'-dRP lyase); through its DNA polymerase activity, it adds one nucleotide to the 3' end of the arising single-nucleotide gap. Conducts 'gap-filling' DNA synthesis in a stepwise distributive fashion rather than in a processive fashion as for other DNA polymerases. It is also able to cleave sugar-phosphate bonds 3' to an intact AP site, acting as an AP lyase. The chain is DNA polymerase beta (POLB) from Homo sapiens (Human).